A 148-amino-acid chain; its full sequence is Small ribosomal subunit protein eS19G (148 aa).

This sequence belongs to the eukaryotic ribosomal protein eS19 family.

In terms of biological role, elimination of the ALEP-1 gene from all somatic cells in its fully activate state may represent an alternative way to gene regulation. The protein is Small ribosomal subunit protein eS19G (RPS19G) of Ascaris suum (Pig roundworm).